Consider the following 188-residue polypeptide: Elongation factor P (188 aa).

K34 carries the post-translational modification N6-(3,6-diaminohexanoyl)-5-hydroxylysine.

The protein belongs to the elongation factor P family. Post-translationally, may be beta-lysylated on the epsilon-amino group of Lys-34 by the combined action of EpmA and EpmB, and then hydroxylated on the C5 position of the same residue by EpmC (if this protein is present). Lysylation is critical for the stimulatory effect of EF-P on peptide-bond formation. The lysylation moiety may extend toward the peptidyltransferase center and stabilize the terminal 3-CCA end of the tRNA. Hydroxylation of the C5 position on Lys-34 may allow additional potential stabilizing hydrogen-bond interactions with the P-tRNA.

The protein resides in the cytoplasm. Its pathway is protein biosynthesis; polypeptide chain elongation. Involved in peptide bond synthesis. Alleviates ribosome stalling that occurs when 3 or more consecutive Pro residues or the sequence PPG is present in a protein, possibly by augmenting the peptidyl transferase activity of the ribosome. Modification of Lys-34 is required for alleviation. The sequence is that of Elongation factor P from Proteus mirabilis (strain HI4320).